Consider the following 200-residue polypeptide: Inner membrane-spanning protein YciB (200 aa).

6 consecutive transmembrane segments (helical) span residues 7–27 (HPLF…FVNA), 32–52 (FAAT…SYVV), 56–76 (IPLM…LTLV), 93–113 (LFAA…AIMF), 126–146 (ILTF…EIIW), and 153–173 (FWVG…AIAQ).

Belongs to the YciB family.

The protein resides in the cell inner membrane. Functionally, plays a role in cell envelope biogenesis, maintenance of cell envelope integrity and membrane homeostasis. The chain is Inner membrane-spanning protein YciB from Bradyrhizobium sp. (strain ORS 278).